Here is a 208-residue protein sequence, read N- to C-terminus: 3-demethoxyubiquinol 3-hydroxylase (208 aa).

Positions 57, 87, 90, 139, 171, and 174 each coordinate Fe cation.

It belongs to the COQ7 family. Fe cation is required as a cofactor.

Its subcellular location is the cell membrane. It carries out the reaction a 5-methoxy-2-methyl-3-(all-trans-polyprenyl)benzene-1,4-diol + AH2 + O2 = a 3-demethylubiquinol + A + H2O. Its pathway is cofactor biosynthesis; ubiquinone biosynthesis. Its function is as follows. Catalyzes the hydroxylation of 2-nonaprenyl-3-methyl-6-methoxy-1,4-benzoquinol during ubiquinone biosynthesis. In Burkholderia ambifaria (strain ATCC BAA-244 / DSM 16087 / CCUG 44356 / LMG 19182 / AMMD) (Burkholderia cepacia (strain AMMD)), this protein is 3-demethoxyubiquinol 3-hydroxylase.